The following is a 208-amino-acid chain: MSLIHPDTAKYPFKFEPFLRQEYSFSLDPDRPICEFYNSREGPKSCPRGPLCPKKHVLPIFQNKIVCRHWLRGLCKKNDQCEYLHEYNLRKMPECVFFSKNGYCTQSPDCQYLHIDPASKIPKCENYEMGFCPLGSSCPRRHIKKVFCQRYMTGFCPLGKDECDMEHPQFIIPDEGSKLRIKRDDEINTRKMDEEKERRLNAIINGEV.

5 consecutive C3H1-type zinc fingers follow at residues 28–59, 61–88, 89–117, 118–145, and 147–170; these read DPDR…HVLP, FQNK…HEYN, LRKM…HIDP, ASKI…HIKK, and FCQR…HPQF.

Belongs to the CPSF4/YTH1 family. As to quaternary structure, component of the cleavage and polyadenylation factor (CPF) complex, which is composed of at least PTI1, SYC1, SSU72, GLC7, MPE1, REF2, PFS2, PTA1, YSH1/BRR5, SWD2, CFT2/YDH1, YTH1, CFT1/YHH1, FIP1 and PAP1. Interacts with FIP1 and YSH1.

The protein resides in the nucleus. RNA-binding component of the cleavage and polyadenylation factor (CPF) complex, which plays a key role in polyadenylation-dependent pre-mRNA 3'-end formation and cooperates with cleavage factors including the CFIA complex and NAB4/CFIB. The chain is mRNA 3'-end-processing protein YTH1 (YTH1) from Saccharomyces cerevisiae (strain ATCC 204508 / S288c) (Baker's yeast).